The primary structure comprises 398 residues: ATP-dependent RNA helicase eIF4A (398 aa).

The short motif at 25–53 (DSFDSMELKPELLRGIYAYGFERPSAIQQ) is the Q motif element. The region spanning 56-226 (ILPIIKGNDV…TKFMRDPVRI (171 aa)) is the Helicase ATP-binding domain. An ATP-binding site is contributed by 69–76 (AQSGTGKT). The DEAD box motif lies at 174 to 177 (DEAD). The region spanning 237–398 (GIKQFYIAVE…EMPMNVADLI (162 aa)) is the Helicase C-terminal domain.

The protein belongs to the DEAD box helicase family. eIF4A subfamily. Component of the eIF4F complex, which composition varies with external and internal environmental conditions. It is composed of at least eIF4A, eIF4E and eIF4G.

The protein localises to the cytoplasm. The catalysed reaction is ATP + H2O = ADP + phosphate + H(+). Its function is as follows. ATP-dependent RNA helicase which is a subunit of the eIF4F complex involved in cap recognition and is required for mRNA binding to ribosome. In the current model of translation initiation, eIF4A unwinds RNA secondary structures in the 5'-UTR of mRNAs which is necessary to allow efficient binding of the small ribosomal subunit, and subsequent scanning for the initiator codon. In Neosartorya fischeri (strain ATCC 1020 / DSM 3700 / CBS 544.65 / FGSC A1164 / JCM 1740 / NRRL 181 / WB 181) (Aspergillus fischerianus), this protein is ATP-dependent RNA helicase eIF4A (tif1).